We begin with the raw amino-acid sequence, 1000 residues long: C2 domain-containing protein 5 (1000 aa).

The region spanning 1–109 (MPGKLKVKIV…EAATVISGWF (109 aa)) is the C2 domain. 6 residues coordinate Ca(2+): D19, D26, D76, D78, S81, and D84. A Phosphoserine; by PKB/AKT2 modification is found at S197. Residues S200 and S260 each carry the phosphoserine modification. The interval 265-330 (MKEIPFNEDP…SGSAGKEGGP (66 aa)) is disordered. A compositionally biased stretch (polar residues) spans 274–289 (PNPNTHSSGPSTPLKN). A compositionally biased stretch (low complexity) spans 290 to 318 (QTYSFSPSKSYSRQSSSSDTDLSLTPKTG). Residues S293, S295, S304, S305, and S306 each carry the phosphoserine modification. The residue at position 317 (T317) is a Phosphothreonine. Gly residues predominate over residues 319–328 (MGSGSAGKEG). A Phosphoserine modification is found at S323. T601 is subject to Phosphothreonine. Residues 639–669 (EIIGSPIPEPRQRSRLLRSQSESSDEVTELD) form a disordered region. Phosphoserine occurs at positions 643, 657, 659, 661, and 662. T666 is subject to Phosphothreonine. At S671 the chain carries Phosphoserine. T807 bears the Phosphothreonine mark. S817 and S852 each carry phosphoserine.

Requires Ca(2+) as cofactor. In terms of processing, phosphorylated on Ser-197 by active myristoylated kinase AKT2; insulin-stimulated phosphorylation by AKT2 regulates SLC2A4/GLUT4 translocation into the plasma membrane.

The protein localises to the cytoplasmic vesicle membrane. Its subcellular location is the cytoplasm. It is found in the cell cortex. It localises to the cell membrane. The protein resides in the cell projection. The protein localises to the ruffle. Functionally, required for insulin-stimulated glucose transport and glucose transporter SLC2A4/GLUT4 translocation from intracellular glucose storage vesicle (GSV) to the plasma membrane (PM) in adipocytes. Binds phospholipid membranes in a calcium-dependent manner and is necessary for the optimal membrane fusion between SLC2A4/GLUT4 GSV and the PM. The chain is C2 domain-containing protein 5 (C2CD5) from Pongo abelii (Sumatran orangutan).